Consider the following 883-residue polypeptide: DNA topoisomerase 1 (883 aa).

The region spanning 2 to 126 (PKLVIVESPT…TKRMVFHEIT (125 aa)) is the Toprim domain. 2 residues coordinate Mg(2+): glutamate 8 and aspartate 95. A Topo IA-type catalytic domain is found at 141 to 583 (DQRLVHAQET…QFYRGDRGLE (443 aa)). Residues 175 to 180 (SAGRVQ) form an interaction with DNA region. The segment at 271–294 (SLEEKPTTRKPAPPFTTSTLQQES) is disordered. Catalysis depends on tyrosine 320, which acts as the O-(5'-phospho-DNA)-tyrosine intermediate. Positions 842 to 883 (AKAGQAKAKGGRRSTGTPKSGETKARTTKTTKKTTTRRTTSR) are disordered. Basic residues predominate over residues 867-883 (RTTKTTKKTTTRRTTSR).

The protein belongs to the type IA topoisomerase family. As to quaternary structure, monomer. Mg(2+) serves as cofactor.

The catalysed reaction is ATP-independent breakage of single-stranded DNA, followed by passage and rejoining.. Releases the supercoiling and torsional tension of DNA, which is introduced during the DNA replication and transcription, by transiently cleaving and rejoining one strand of the DNA duplex. Introduces a single-strand break via transesterification at a target site in duplex DNA. The scissile phosphodiester is attacked by the catalytic tyrosine of the enzyme, resulting in the formation of a DNA-(5'-phosphotyrosyl)-enzyme intermediate and the expulsion of a 3'-OH DNA strand. The free DNA strand then undergoes passage around the unbroken strand, thus removing DNA supercoils. Finally, in the religation step, the DNA 3'-OH attacks the covalent intermediate to expel the active-site tyrosine and restore the DNA phosphodiester backbone. The polypeptide is DNA topoisomerase 1 (Synechococcus elongatus (strain ATCC 33912 / PCC 7942 / FACHB-805) (Anacystis nidulans R2)).